A 786-amino-acid polypeptide reads, in one-letter code: ATP-dependent RNA helicase SUPV3L1, mitochondrial (786 aa).

The transit peptide at 1–22 (MSFSRALLWARLPAGRQAGHRA) directs the protein to the mitochondrion. At Lys99 the chain carries N6-acetyllysine. The 141-residue stretch at 194 to 334 (DARAMQRKII…AIDLVMELMY (141 aa)) folds into the Helicase ATP-binding domain. 207-214 (GPTNSGKT) serves as a coordination point for ATP. The residue at position 220 (Lys220) is an N6-acetyllysine. The region spanning 353–518 (VLDHALESLD…GLHPTAEQIE (166 aa)) is the Helicase C-terminal domain. The interval 650-786 (PDASLIRDLQ…RRKKKEPDSD (137 aa)) is interaction with LAMTOR5, important for protein stability. Disordered regions lie at residues 690–730 (GFPS…DAGE) and 749–786 (KQLEKEWMTQQTEHNKEKTESGTHPKGTRRKKKEPDSD). Residues 693 to 705 (SGSQSRLSGTLKS) show a composition bias toward polar residues. Ser725 carries the phosphoserine modification. The span at 749–771 (KQLEKEWMTQQTEHNKEKTESGT) shows a compositional bias: basic and acidic residues.

The protein belongs to the helicase family. In terms of assembly, homodimer; in free form. Component of the mitochondrial degradosome (mtEXO) complex which is a heteropentamer containing 2 copies of SUPV3L1 and 3 copies of PNPT1. As part of mitochondrial degradosome complex, interacts with GRSF1 in a RNA-dependent manner; the interaction enhances the activity of the complex. Interacts with LAMTOR5/HBXIP, WRN and BLM. Requires Mg(2+) as cofactor. Mn(2+) serves as cofactor. Broadly expressed.

Its subcellular location is the nucleus. The protein localises to the mitochondrion matrix. It is found in the mitochondrion nucleoid. The enzyme catalyses ATP + H2O = ADP + phosphate + H(+). Its activity is regulated as follows. Helicase activity toward DNA substrate is inhibited by micromolar concentrations of 5,6-dichloro-1-(beta-D-ribofuranosyl)benzotriazole (DRBT) and 4,5,6,7-tetrabromobenzotriazole (TBBT). Helicase activity toward RNA substrate is inhibited by elevated concentrations of TBBT. Inhibited by some ring-expanded nucleoside analogs. Major helicase player in mitochondrial RNA metabolism. Component of the mitochondrial degradosome (mtEXO) complex, that degrades 3' overhang double-stranded RNA with a 3'-to-5' directionality in an ATP-dependent manner. Involved in the degradation of non-coding mitochondrial transcripts (MT-ncRNA) and tRNA-like molecules. ATPase and ATP-dependent multisubstrate helicase, able to unwind double-stranded (ds) DNA and RNA, and RNA/DNA heteroduplexes in the 5'-to-3' direction. Plays a role in the RNA surveillance system in mitochondria; regulates the stability of mature mRNAs, the removal of aberrantly formed mRNAs and the rapid degradation of non coding processing intermediates. Also implicated in recombination and chromatin maintenance pathways. May protect cells from apoptosis. Associates with mitochondrial DNA. This is ATP-dependent RNA helicase SUPV3L1, mitochondrial (SUPV3L1) from Homo sapiens (Human).